Reading from the N-terminus, the 146-residue chain is Hemoglobin A/D subunit beta (146 aa).

A Globin domain is found at 2-146; sequence HWTSEEKQYI…VAHALALGYH (145 aa). The heme b site is built by His-63 and His-92.

The protein belongs to the globin family. In terms of assembly, hemoglobins A and D are heterotetramers of alpha-1, alpha-2 and two identical beta chains. Red blood cells.

Involved in oxygen transport from the lung to the various peripheral tissues. The polypeptide is Hemoglobin A/D subunit beta (Aldabrachelys gigantea (Aldabra giant tortoise)).